We begin with the raw amino-acid sequence, 345 residues long: MNSNDKKKVVRSWIEQFVHDFVEQLSKPTKDSVNVALKRRKHNSWNGSLDSKANERQKVKVFSFPRNETTIAQLFRVLDCVHEAVISDTVITKRDIYYRDVDLFKRQTVVDELLGDISNTIGCSRSDLNVEASAKGLVFGSIHIALENGTVITATKPLLISHHRISSITSTAKWVLVIEKEAVFQTLTEEALADTIIVTAKGFPDLMTRKFLVKLAKALPDAKFFGIFDWDPHGLCIYSCFKYGSNAYSHEPHSQLRNLQLLGPLYEDIFNKNQEFSLKLNKRDIKMITTLLQFEGFQKEPVVREQLQRMLFIQKKAEIQAILEFPSWIKGKLADADKSGKHSVR.

One can recognise a Topo IIA-type catalytic domain in the interval 5-137 (DKKKVVRSWI…LNVEASAKGL (133 aa)). Catalysis depends on Tyr98, which acts as the O-(5'-phospho-DNA)-tyrosine intermediate. Residues Glu179 and Asp229 each contribute to the Mg(2+) site.

It belongs to the TOP6A family. As to quaternary structure, component of the DSB catalytic core (DSBC) complex, composed of at least rec12, rec6 and rec14. The complex interacts with mde2. Mg(2+) is required as a cofactor.

The protein resides in the cytoplasm. Its subcellular location is the nucleus. The catalysed reaction is ATP-dependent breakage, passage and rejoining of double-stranded DNA.. Its function is as follows. Required for formation of the double-strand breaks (DSBs) that initiate meiotic recombination. Required for crossover recombination and chiasmatic segregation of chromosomes during meiosis I. Also involved in the faithful equational segregation of chromosomes during meiosis II. In Schizosaccharomyces pombe (strain 972 / ATCC 24843) (Fission yeast), this protein is Meiotic recombination protein rec12.